Here is a 189-residue protein sequence, read N- to C-terminus: Elongation factor P (189 aa).

Lysine 34 carries the N6-(3,6-diaminohexanoyl)-5-hydroxylysine modification.

Belongs to the elongation factor P family. May be beta-lysylated on the epsilon-amino group of Lys-34 by the combined action of EpmA and EpmB, and then hydroxylated on the C5 position of the same residue by EpmC (if this protein is present). Lysylation is critical for the stimulatory effect of EF-P on peptide-bond formation. The lysylation moiety may extend toward the peptidyltransferase center and stabilize the terminal 3-CCA end of the tRNA. Hydroxylation of the C5 position on Lys-34 may allow additional potential stabilizing hydrogen-bond interactions with the P-tRNA.

It is found in the cytoplasm. It functions in the pathway protein biosynthesis; polypeptide chain elongation. Involved in peptide bond synthesis. Alleviates ribosome stalling that occurs when 3 or more consecutive Pro residues or the sequence PPG is present in a protein, possibly by augmenting the peptidyl transferase activity of the ribosome. Modification of Lys-34 is required for alleviation. The polypeptide is Elongation factor P (Acinetobacter baumannii (strain AB307-0294)).